A 361-amino-acid polypeptide reads, in one-letter code: Phospho-N-acetylmuramoyl-pentapeptide-transferase (361 aa).

10 helical membrane passes run 25–45, 72–92, 95–115, 135–155, 169–189, 200–220, 240–260, 264–284, 289–309, and 338–358; these read TGGA…WIID, TPTM…VLWA, LNPY…VGFY, LLIE…LGRA, VMLN…VGAG, GLAI…SYLA, LAVL…FNAP, IFMG…IAVA, IVLA…IVQV, and QIVI…LSTL.

The protein belongs to the glycosyltransferase 4 family. MraY subfamily. It depends on Mg(2+) as a cofactor.

It localises to the cell inner membrane. The enzyme catalyses UDP-N-acetyl-alpha-D-muramoyl-L-alanyl-gamma-D-glutamyl-meso-2,6-diaminopimeloyl-D-alanyl-D-alanine + di-trans,octa-cis-undecaprenyl phosphate = di-trans,octa-cis-undecaprenyl diphospho-N-acetyl-alpha-D-muramoyl-L-alanyl-D-glutamyl-meso-2,6-diaminopimeloyl-D-alanyl-D-alanine + UMP. It functions in the pathway cell wall biogenesis; peptidoglycan biosynthesis. In terms of biological role, catalyzes the initial step of the lipid cycle reactions in the biosynthesis of the cell wall peptidoglycan: transfers peptidoglycan precursor phospho-MurNAc-pentapeptide from UDP-MurNAc-pentapeptide onto the lipid carrier undecaprenyl phosphate, yielding undecaprenyl-pyrophosphoryl-MurNAc-pentapeptide, known as lipid I. This chain is Phospho-N-acetylmuramoyl-pentapeptide-transferase, found in Rhodopseudomonas palustris (strain TIE-1).